The following is a 402-amino-acid chain: Multidrug resistance protein MdtH (402 aa).

The Cytoplasmic portion of the chain corresponds to 1 to 12 (MSRVSQARNLGK). A helical membrane pass occupies residues 13–33 (YFLLIDNMLVVLGFFVVFPLI). Residues 34 to 98 (SIRFVDQMGW…GFATMGIAHE (65 aa)) lie on the Periplasmic side of the membrane. A helical membrane pass occupies residues 99 to 116 (PWLLWFSCLLSGLGGTLF). The Cytoplasmic segment spans residues 117–138 (DPPRSALVVKLIRPQQRGRFFS). A helical transmembrane segment spans residues 139–159 (LLMMQDSAGAVIGALLGSWLL). Over 160–164 (QYDFR) the chain is Periplasmic. A helical transmembrane segment spans residues 165-185 (LVCATGAVLFVLCAAFNAWLL). The Cytoplasmic portion of the chain corresponds to 186–213 (PAWKLSTVRTPVREGMTRVMRDKRFVTY). A helical transmembrane segment spans residues 214-234 (VLTLAGYYMLAVQVMLMLPIM). The Periplasmic segment spans residues 235–243 (VNDVAGAPS). A helical transmembrane segment spans residues 244–264 (AVKWMYAIEACLSLTLLYPIA). At 265 to 276 (RWSEKHFRLEHR) the chain is on the cytoplasmic side. Residues 277–297 (LMAGLLIMSLSMMPVGMVSGL) form a helical membrane-spanning segment. Topologically, residues 298-299 (QQ) are periplasmic. Residues 300–320 (LFTLICLFYIGSIIAEPARET) form a helical membrane-spanning segment. Residues 321 to 339 (LSASLADARARGSYMGFSR) lie on the Cytoplasmic side of the membrane. The helical transmembrane segment at 340 to 360 (LGLAIGGAIGYIGGGWLFDLG) threads the bilayer. The Periplasmic segment spans residues 361–367 (KSVHQPE). Residues 368-388 (LPWMMLGIIGIFTFLALGWQF) traverse the membrane as a helical segment. Over 389–402 (SQKRAARRLLERDA) the chain is Cytoplasmic.

The protein belongs to the major facilitator superfamily. DHA1 family. MdtH (TC 2.A.1.2.21) subfamily.

It is found in the cell inner membrane. In terms of biological role, confers resistance to norfloxacin and enoxacin. This Escherichia coli O157:H7 protein is Multidrug resistance protein MdtH.